Here is a 585-residue protein sequence, read N- to C-terminus: Potassium-transporting ATPase potassium-binding subunit (585 aa).

A run of 12 helical transmembrane segments spans residues 23-43 (GVIIILIYLIIASVLAYILSF), 85-105 (FINLLLFNFFAGLISFLVIMF), 152-172 (FVITGLMFLSAGTGFAASMAF), 194-214 (IFDLILPLTVILTVILILAGI), 275-295 (VEFVSFVIIPLASLISLGIVF), 307-327 (VVMFFFIFDALFAFFGEFAGV), 345-365 (AIGISQSTIFAVGATITSTGA), 367-387 (NAALVSYTPAGIIGVLIGLLL), 397-417 (GVLNIFMYIIFTVFIASLMVG), 444-464 (LLVVIPLGITLMIPHLMSSFV), 502-522 (LDGVLMLLGRYLLMAFQLIIA), and 547-567 (VLLIAAMILIGLLSYFPIIVL).

The protein belongs to the KdpA family. As to quaternary structure, the system is composed of three essential subunits: KdpA, KdpB and KdpC.

The protein localises to the cell membrane. Its function is as follows. Part of the high-affinity ATP-driven potassium transport (or Kdp) system, which catalyzes the hydrolysis of ATP coupled with the electrogenic transport of potassium into the cytoplasm. This subunit binds the extracellular potassium ions and delivers the ions to the membrane domain of KdpB through an intramembrane tunnel. This is Potassium-transporting ATPase potassium-binding subunit from Thermoplasma acidophilum (strain ATCC 25905 / DSM 1728 / JCM 9062 / NBRC 15155 / AMRC-C165).